Consider the following 1020-residue polypeptide: Calcium-transporting ATPase sarcoplasmic/endoplasmic reticulum type (1020 aa).

The Cytoplasmic portion of the chain corresponds to M1 to S48. The chain crosses the membrane as a helical span at residues I49 to A69. Topologically, residues I70–V89 are lumenal. The helical transmembrane segment at E90–R110 threads the bilayer. At N111–L253 the chain is on the cytoplasmic side. Position 240 is a phosphoserine (S240). The chain crosses the membrane as a helical span at residues D254 to A273. The Lumenal portion of the chain corresponds to I274–Y295. Residues F296–A313 form a helical membrane-spanning segment. V304, A305, I307, and E309 together coordinate Ca(2+). The Cytoplasmic portion of the chain corresponds to V314–M757. D351 (4-aspartylphosphate intermediate) is an active-site residue. Mg(2+)-binding residues include D703 and D707. The helical transmembrane segment at K758–L777 threads the bilayer. Residues N768 and E771 each contribute to the Ca(2+) site. Topologically, residues T778 to L787 are lumenal. A helical transmembrane segment spans residues I788–G808. Residues N796, T799, and D800 each coordinate Ca(2+). Residues F809–L828 lie on the Cytoplasmic side of the membrane. The helical transmembrane segment at I829 to A851 threads the bilayer. Topologically, residues A852–M897 are lumenal. Residues T898 to S917 form a helical membrane-spanning segment. E908 provides a ligand contact to Ca(2+). Topologically, residues E918–N930 are cytoplasmic. The chain crosses the membrane as a helical span at residues L931 to Y949. Residues V950 to A964 are Lumenal-facing. The helical transmembrane segment at E965–K985 threads the bilayer. Residues F986–L1020 are Cytoplasmic-facing.

The protein belongs to the cation transport ATPase (P-type) (TC 3.A.3) family. In terms of assembly, interacts with SclA and SclB.

Its subcellular location is the endoplasmic reticulum membrane. It is found in the sarcoplasmic reticulum membrane. It catalyses the reaction Ca(2+)(in) + ATP + H2O = Ca(2+)(out) + ADP + phosphate + H(+). Its function is as follows. This magnesium-dependent enzyme catalyzes the hydrolysis of ATP coupled with the transport of calcium. The sequence is that of Calcium-transporting ATPase sarcoplasmic/endoplasmic reticulum type from Drosophila melanogaster (Fruit fly).